Consider the following 53-residue polypeptide: Sec-independent protein translocase protein TatA (53 aa).

Residues 1 to 21 (MGMSLSHLLIVLLIIFVLFGA) traverse the membrane as a helical segment.

It belongs to the TatA/E family. As to quaternary structure, the Tat system comprises two distinct complexes: a TatABC complex, containing multiple copies of TatA, TatB and TatC subunits, and a separate TatA complex, containing only TatA subunits. Substrates initially bind to the TatABC complex, which probably triggers association of the separate TatA complex to form the active translocon.

The protein resides in the cell inner membrane. In terms of biological role, part of the twin-arginine translocation (Tat) system that transports large folded proteins containing a characteristic twin-arginine motif in their signal peptide across membranes. TatA could form the protein-conducting channel of the Tat system. This Rickettsia conorii (strain ATCC VR-613 / Malish 7) protein is Sec-independent protein translocase protein TatA.